Consider the following 67-residue polypeptide: MRSKHNELKSPIMSCSKRTEWKSILGPLIFRQQMILTQNLNQKLKTIKACMYQIRKLSKLKALYRGL.

This sequence belongs to the rhabdoviruses C protein family.

Its function is as follows. Seems to stimulates transcription by the viral polymerase. May play a role in viral pathogenesis or transmission by insects vectors. The protein is Protein C' (P) of Aedes (Bovine).